The chain runs to 181 residues: HGPRTase-like protein 2 (181 aa).

The protein belongs to the purine/pyrimidine phosphoribosyltransferase family. Archaeal HPRT subfamily.

May catalyze a purine salvage reaction, the substrate is unknown. The sequence is that of HGPRTase-like protein 2 from Haloferax volcanii (strain ATCC 29605 / DSM 3757 / JCM 8879 / NBRC 14742 / NCIMB 2012 / VKM B-1768 / DS2) (Halobacterium volcanii).